Here is a 709-residue protein sequence, read N- to C-terminus: Phosphoprotein (709 aa).

The tract at residues 1–35 (MDKLELVNDGLNIIDFIQKNQKEIQKTYGRSSIQQ) is N0 binding. Residues 53-92 (SGESEQVEGGMSKDDGDVERRNLEDLSSTSPTDGTIGKRV) are disordered. A compositionally biased stretch (basic and acidic residues) spans 63-76 (MSKDDGDVERRNLE). Residues 110-140 (VVTDVVYHDHGGECTGYGFTSSPERGWSDYT) form an interaction with host STAT1 region. Phosphoserine; by host is present on serine 257. The interval 265-324 (ISPEDEEPSSVGGKPNESIGRTIEGQSIRDNLQAKDNKSTDVPGAGPKDSAVKEEPPQKR) is disordered. Residue serine 350 is modified to Phosphoserine; by host. A disordered region spans residues 384–473 (VQTADRQRPG…VNPVDDNDSL (90 aa)). 2 stretches are compositionally biased toward polar residues: residues 416–426 (GTENVPGSKSG) and 444–456 (NAEN…STAV). Residues 475 to 580 (DKYIMPSDDF…LVSMMIMIPG (106 aa)) are multimerization.

Homotetramer. Interacts (via multimerization domain) with polymerase L; this interaction forms the polymerase L-P complex. Interacts (via N-terminus) with N0 (via Ncore); this interaction allows P to chaperon N0 to avoid N polymerization before encapsidation. Interacts (via C-terminus) with N-RNA template (via C-terminus); this interaction positions the polymerase on the template for both transcription and replication. Interacts with host STAT1.

It is found in the virion. Its subcellular location is the host cytoplasm. In terms of biological role, essential cofactor of the RNA polymerase L that plays a central role in the transcription and replication by forming the polymerase complex with RNA polymerase L and recruiting L to the genomic N-RNA template for RNA synthesis. Also plays a central role in the encapsidation of nascent RNA chains by forming the encapsidation complex with the nucleocapsid protein N (N-P complex). Acts as a chaperone for newly synthesized free N protein, so-called N0, allowing encapsidation of nascent RNA chains during replication. The nucleoprotein protein N prevents excessive phosphorylation of P, which leads to down-regulation of viral transcription/ replication. Participates, together with N, in the formation of viral factories (viroplasms), which are large inclusions in the host cytoplasm where replication takes place. In Nipah virus, this protein is Phosphoprotein (P/V/C).